A 374-amino-acid polypeptide reads, in one-letter code: O-methyltransferase 16 (374 aa).

Residues Ser195, Gly219, Asp242, Asp262, and Lys276 each coordinate S-adenosyl-L-homocysteine. Residue Asp242 coordinates S-adenosyl-L-methionine. His280 acts as the Proton acceptor in catalysis.

This sequence belongs to the class I-like SAM-binding methyltransferase superfamily. Cation-independent O-methyltransferase family. Homodimer. As to expression, expressed mainly in vasculature and cortex tissues at low levels.

It carries out the reaction dopamine + S-adenosyl-L-methionine = 4-methoxytyramine + S-adenosyl-L-homocysteine + H(+). The protein operates within aromatic compound metabolism. It functions in the pathway alkaloid biosynthesis. Functionally, O-methyltransferase participating in the biosynthesis of natural products derived from phenylethylamine, including mescaline, a natural hallucinogen potentially used in psychotherapeutic treatments. Catalyzes the O-methylation of dopamine to produce 4-methoxytyramine. The chain is O-methyltransferase 16 from Lophophora williamsii (Peyote).